Here is a 952-residue protein sequence, read N- to C-terminus: Probable mixed-linked glucan synthase 6 (952 aa).

A run of 2 helical transmembrane segments spans residues 102-122 and 132-152; these read LLHP…LFVI and AMWL…SWLL. Asp227 is a catalytic residue. The stretch at 278–308 forms a coiled coil; sequence EEFVNDRRRVRKEYDDFKARINGLEHDIKQR. Substrate is bound by residues Asp429 and Asp431. Residue Asp636 is part of the active site. The next 6 helical transmembrane spans lie at 718–738, 744–764, 782–802, 834–854, 865–885, and 898–918; these read LFLI…HFIV, MFYV…VLEV, MTAS…KVVF, WLMI…AVAF, WLKV…LYPF, and VVVL…YINI.

It belongs to the glycosyltransferase 2 family. Plant cellulose synthase-like F subfamily.

It is found in the golgi apparatus membrane. In terms of biological role, may catalyze both beta-1,3 and beta-1,4 glycosidic linkage on beta-D-glucan. Essential for (1,3;1,4)-beta-D-glucans synthesis in grasses and cereals (Poaceae). The mixed-linked glucans (which are not present in walls of dicotyledons or most other monocotyledonous plants) are particularly important constituents of the walls of the starchy endosperm and aleurone cells of cereal grains such as oats, wheat, rice and barley. They can account for up to 70% by weight of the wall. This is Probable mixed-linked glucan synthase 6 (CSLF6) from Oryza sativa subsp. japonica (Rice).